The primary structure comprises 251 residues: Pyrroloquinoline-quinone synthase (251 aa).

This sequence belongs to the PqqC family.

It carries out the reaction 6-(2-amino-2-carboxyethyl)-7,8-dioxo-1,2,3,4,7,8-hexahydroquinoline-2,4-dicarboxylate + 3 O2 = pyrroloquinoline quinone + 2 H2O2 + 2 H2O + H(+). It functions in the pathway cofactor biosynthesis; pyrroloquinoline quinone biosynthesis. In terms of biological role, ring cyclization and eight-electron oxidation of 3a-(2-amino-2-carboxyethyl)-4,5-dioxo-4,5,6,7,8,9-hexahydroquinoline-7,9-dicarboxylic-acid to PQQ. This chain is Pyrroloquinoline-quinone synthase, found in Klebsiella pneumoniae subsp. pneumoniae (strain ATCC 700721 / MGH 78578).